A 158-amino-acid chain; its full sequence is Ribosomal RNA large subunit methyltransferase H (158 aa).

S-adenosyl-L-methionine-binding positions include L74, G105, and 124–129 (LGPLTL).

This sequence belongs to the RNA methyltransferase RlmH family. In terms of assembly, homodimer.

It localises to the cytoplasm. It carries out the reaction pseudouridine(1915) in 23S rRNA + S-adenosyl-L-methionine = N(3)-methylpseudouridine(1915) in 23S rRNA + S-adenosyl-L-homocysteine + H(+). Its function is as follows. Specifically methylates the pseudouridine at position 1915 (m3Psi1915) in 23S rRNA. The chain is Ribosomal RNA large subunit methyltransferase H from Xylella fastidiosa (strain Temecula1 / ATCC 700964).